The sequence spans 358 residues: Cholesterol galactosyltransferase (358 aa).

This sequence belongs to the glycosyltransferase 2 family.

The catalysed reaction is cholesterol + UDP-alpha-D-galactose = cholesteryl 3-beta-D-galactoside + UDP + H(+). Its pathway is glycolipid biosynthesis. Its function is as follows. Galactosyltransferase involved in the synthesis of cholesterol glycolipids, which are formed by the use of host-derived cholesterol and have been shown to be immunogenic, and possibly contribute to Lyme disease pathogenesis. Catalyzes the formation of cholesteryl beta-D-galactopyranoside (CGal) from cholesterol and UDP-alpha-D-galactose. Cannot use GDP-mannose. This is Cholesterol galactosyltransferase from Borreliella burgdorferi (strain ATCC 35210 / DSM 4680 / CIP 102532 / B31) (Borrelia burgdorferi).